Here is a 273-residue protein sequence, read N- to C-terminus: Nickel import ATP-binding protein NikE (273 aa).

The ABC transporter domain maps to 13–252 (YRTGGLLRKR…AHPVGRQLQA (240 aa)). An ATP-binding site is contributed by 45–52 (GSSGSGKS).

The protein belongs to the ABC transporter superfamily. Nickel importer (TC 3.A.1.5.3) family. In terms of assembly, the complex is composed of two ATP-binding proteins (NikD and NikE), two transmembrane proteins (NikB and NikC) and a solute-binding protein (NikA).

It is found in the cell inner membrane. The catalysed reaction is Ni(2+)(out) + ATP + H2O = Ni(2+)(in) + ADP + phosphate + H(+). Its function is as follows. Part of the ABC transporter complex NikABCDE involved in nickel import. Responsible for energy coupling to the transport system. In Pseudomonas putida (strain ATCC 47054 / DSM 6125 / CFBP 8728 / NCIMB 11950 / KT2440), this protein is Nickel import ATP-binding protein NikE.